Reading from the N-terminus, the 408-residue chain is Serine/threonine transporter SstT (408 aa).

9 helical membrane passes run 19–39, 48–68, 86–106, 143–163, 193–213, 223–243, 294–314, 322–342, and 367–387; these read SLVS…VISP, LGSL…LVLV, IVGL…LLSF, VTAV…GLGF, FAPL…GFSA, VLLS…VFII, IPLG…VLTL, IEVS…SACG, and VAMQ…SAET.

This sequence belongs to the dicarboxylate/amino acid:cation symporter (DAACS) (TC 2.A.23) family.

The protein resides in the cell inner membrane. The enzyme catalyses L-serine(in) + Na(+)(in) = L-serine(out) + Na(+)(out). It catalyses the reaction L-threonine(in) + Na(+)(in) = L-threonine(out) + Na(+)(out). Involved in the import of serine and threonine into the cell, with the concomitant import of sodium (symport system). The polypeptide is Serine/threonine transporter SstT (Colwellia psychrerythraea (strain 34H / ATCC BAA-681) (Vibrio psychroerythus)).